Consider the following 619-residue polypeptide: 1-deoxy-D-xylulose-5-phosphate synthase (619 aa).

Residues H80 and 121–123 (GHS) each bind thiamine diphosphate. Residue D152 coordinates Mg(2+). Thiamine diphosphate is bound by residues 153–154 (GA), N181, Y288, and E370. N181 serves as a coordination point for Mg(2+).

Belongs to the transketolase family. DXPS subfamily. Homodimer. Mg(2+) is required as a cofactor. The cofactor is thiamine diphosphate.

The enzyme catalyses D-glyceraldehyde 3-phosphate + pyruvate + H(+) = 1-deoxy-D-xylulose 5-phosphate + CO2. It functions in the pathway metabolic intermediate biosynthesis; 1-deoxy-D-xylulose 5-phosphate biosynthesis; 1-deoxy-D-xylulose 5-phosphate from D-glyceraldehyde 3-phosphate and pyruvate: step 1/1. Functionally, catalyzes the acyloin condensation reaction between C atoms 2 and 3 of pyruvate and glyceraldehyde 3-phosphate to yield 1-deoxy-D-xylulose-5-phosphate (DXP). This Yersinia pseudotuberculosis serotype O:3 (strain YPIII) protein is 1-deoxy-D-xylulose-5-phosphate synthase.